A 368-amino-acid polypeptide reads, in one-letter code: Apolipoprotein A-V (368 aa).

The signal sequence occupies residues 1 to 20 (MAAVITWALALLAVFASTQA). A Phosphoserine modification is found at S52. Residues 231–255 (TRKAKDLHTSIQRNLDQLRDELSAF) adopt a coiled-coil conformation. The disordered stretch occupies residues 305–333 (EEIQHQLAPPPPSHSAFAPELGHSDSNKA).

Belongs to the apolipoprotein A1/A4/E family. As to quaternary structure, interacts with GPIHBP1. Interacts with SORL1; this interaction leads to APOA5 internalization and sorting either to lysosomes and degradation, or to the trans-Golgi network. Post-translationally, phosphorylated by FAM20C in the extracellular medium. Liver.

The protein localises to the secreted. The protein resides in the early endosome. Its subcellular location is the late endosome. It is found in the golgi apparatus. It localises to the trans-Golgi network. Minor apolipoprotein mainly associated with HDL and to a lesser extent with VLDL. May also be associated with chylomicrons. Important determinant of plasma triglyceride (TG) levels by both being a potent stimulator of apo-CII lipoprotein lipase (LPL) TG hydrolysis and an inhibitor of the hepatic VLDL-TG production rate (without affecting the VLDL-apoB production rate). Activates poorly lecithin:cholesterol acyltransferase (LCAT) and does not enhance efflux of cholesterol from macrophages. Binds heparin. This is Apolipoprotein A-V (Apoa5) from Mus musculus (Mouse).